The primary structure comprises 213 residues: uncharacterized protein (213 aa).

This is an uncharacterized protein from Acidianus two-tailed virus (ATV).